The sequence spans 138 residues: Putative pre-16S rRNA nuclease (138 aa).

Belongs to the YqgF nuclease family.

Its subcellular location is the cytoplasm. In terms of biological role, could be a nuclease involved in processing of the 5'-end of pre-16S rRNA. The chain is Putative pre-16S rRNA nuclease from Bacteroides fragilis (strain ATCC 25285 / DSM 2151 / CCUG 4856 / JCM 11019 / LMG 10263 / NCTC 9343 / Onslow / VPI 2553 / EN-2).